Here is a 360-residue protein sequence, read N- to C-terminus: MSIHHLARANVLALEPYLSARRLGGQGNIWLNANEYPLPPGYGLRGGNLNRYPACQPAGVINGYAAYAGVQPEQVVVCRGADEGIELLIRAFCEPGADAILFCPPTYGMYSVSAETFGIARRTVEARQDWQLDLQAIRARLDGVKLVYICSPNNPTGNLIDLETLRAMLEMTHGRALLVVDEAYIDFCPQASVVNWLAEYPHLVILRTLSKAFALAGLRCGFVLANVEVIQLLLKVIAPYPLALPVADIAEQALSDEGLRQMRTRVAEINTNRETLAHGLADCPCICAVYPSVSNYLLVRCDPAYRVFKTLWDQGTILRDQSKQPGLADCLRITIGTLAECQSVIAVLRALKPSSSKESL.

Lys-211 carries the N6-(pyridoxal phosphate)lysine modification.

It belongs to the class-II pyridoxal-phosphate-dependent aminotransferase family. Histidinol-phosphate aminotransferase subfamily. In terms of assembly, homodimer. The cofactor is pyridoxal 5'-phosphate.

The catalysed reaction is L-histidinol phosphate + 2-oxoglutarate = 3-(imidazol-4-yl)-2-oxopropyl phosphate + L-glutamate. It functions in the pathway amino-acid biosynthesis; L-histidine biosynthesis; L-histidine from 5-phospho-alpha-D-ribose 1-diphosphate: step 7/9. This Sodalis glossinidius (strain morsitans) protein is Histidinol-phosphate aminotransferase.